Consider the following 469-residue polypeptide: Uronate isomerase (469 aa).

It belongs to the metallo-dependent hydrolases superfamily. Uronate isomerase family.

It carries out the reaction D-glucuronate = D-fructuronate. The enzyme catalyses aldehydo-D-galacturonate = keto-D-tagaturonate. It functions in the pathway carbohydrate metabolism; pentose and glucuronate interconversion. The chain is Uronate isomerase from Edwardsiella ictaluri (strain 93-146).